A 343-amino-acid polypeptide reads, in one-letter code: GTPase Obg (343 aa).

The Obg domain occupies 1-159 (MKYIDEVKIQ…FELKLELRVL (159 aa)). Residues 160-334 (ADVGLLGLPN…LTYAIMGYLE (175 aa)) form the OBG-type G domain. Residues 166–173 (GLPNAGKS), 191–195 (FTTLY), 213–216 (DIPG), 284–287 (NKVD), and 315–317 (SAL) each bind GTP. The Mg(2+) site is built by S173 and T193.

It belongs to the TRAFAC class OBG-HflX-like GTPase superfamily. OBG GTPase family. In terms of assembly, monomer. Mg(2+) is required as a cofactor.

The protein resides in the cytoplasm. Functionally, an essential GTPase which binds GTP, GDP and possibly (p)ppGpp with moderate affinity, with high nucleotide exchange rates and a fairly low GTP hydrolysis rate. Plays a role in control of the cell cycle, stress response, ribosome biogenesis and in those bacteria that undergo differentiation, in morphogenesis control. In Nitrosomonas eutropha (strain DSM 101675 / C91 / Nm57), this protein is GTPase Obg.